We begin with the raw amino-acid sequence, 396 residues long: Purine ribonucleoside efflux pump NepI (396 aa).

The Cytoplasmic segment spans residues 1–21 (MSEFIAENRGADAITRPNWSA). A helical transmembrane segment spans residues 22–42 (VFSVAFCVACLIIVEFLPVSL). At 43 to 54 (LTPMAQDLGISE) the chain is on the periplasmic side. The chain crosses the membrane as a helical span at residues 55–75 (GVAGQSVTVTAFVAMFASLFI). Topologically, residues 76-85 (TQTIQATDRR) are cytoplasmic. The chain crosses the membrane as a helical span at residues 86 to 106 (YVVILFAVLLTLSCLLVSFAN). Position 107 (S107) is a topological domain, periplasmic. A helical transmembrane segment spans residues 108-128 (FSLLLIGRACLGLALGGFWAM). The Cytoplasmic portion of the chain corresponds to 129-147 (SASLTMRLVPPRTVPKALS). The chain crosses the membrane as a helical span at residues 148–168 (VIFGAVSIALVIAAPLGSFLG). At 169-175 (ELIGWRN) the chain is on the periplasmic side. The chain crosses the membrane as a helical span at residues 176–196 (VFNAAAAMGVLCIFWIIKSLP). Residues 197-215 (SLPGEPSHQKQNTFRLLQR) lie on the Cytoplasmic side of the membrane. The chain crosses the membrane as a helical span at residues 216 to 236 (PGVMAGMIAIFMSFAGQFAFF). The Periplasmic portion of the chain corresponds to 237–255 (TYIRPVYMNLAGFGVDGLT). Residues 256–276 (LVLLSFGIASFVGTSLSSFIL) traverse the membrane as a helical segment. The Cytoplasmic segment spans residues 277-281 (KRSVK). A helical membrane pass occupies residues 282–302 (LALAGAPFVLALSALVLTLWG). Residues 303–305 (SDK) lie on the Periplasmic side of the membrane. A helical membrane pass occupies residues 306–326 (IVATGVAIIWGLTFALIPVGW). Residues 327–343 (STWITRSLADQAEKAGS) are Cytoplasmic-facing. A helical membrane pass occupies residues 344–364 (IQVAVIQLANTCGAAIGGYAL). Topologically, residues 365 to 366 (DN) are periplasmic. The chain crosses the membrane as a helical span at residues 367-387 (IGLTSPLMLSGTLMLLTALLV). Residues 388 to 396 (TAKVKMKKS) are Cytoplasmic-facing.

Belongs to the major facilitator superfamily. DHA1 family. NepI (TC 2.A.1.2.26) subfamily.

The protein localises to the cell inner membrane. The catalysed reaction is inosine(in) + H(+)(out) = inosine(out) + H(+)(in). It catalyses the reaction guanosine(in) + H(+)(out) = guanosine(out) + H(+)(in). Its function is as follows. Involved in the efflux of purine ribonucleosides, such as inosine and guanosine. This chain is Purine ribonucleoside efflux pump NepI, found in Escherichia coli O1:K1 / APEC.